Reading from the N-terminus, the 464-residue chain is Heterogeneous nuclear ribonucleoprotein K (464 aa).

M1 is modified (N-acetylmethionine). The tract at residues 1–37 (METEQPEETFPNTETNGEFGKRPAEDMEEEQAFKRSR) is disordered. Positions 1–276 (METEQPEETF…GRGGRPMPPS (276 aa)) are necessary for interaction with DDX1. Positions 19-37 (FGKRPAEDMEEEQAFKRSR) are enriched in basic and acidic residues. At K34 the chain carries N6-acetyllysine; alternate. K34 participates in a covalent cross-link: Glycyl lysine isopeptide (Lys-Gly) (interchain with G-Cter in SUMO1); alternate. K34 participates in a covalent cross-link: Glycyl lysine isopeptide (Lys-Gly) (interchain with G-Cter in SUMO2); alternate. At S36 the chain carries Phosphoserine. Position 39 is a phosphothreonine (T39). One can recognise a KH 1 domain in the interval 42 to 104 (MVELRILLQS…ETIGEILKKI (63 aa)). Glycyl lysine isopeptide (Lys-Gly) (interchain with G-Cter in SUMO2) cross-links involve residues K52 and K60. 2 repeat units span residues 54 to 76 (AGAV…NASV) and 59 to 62 (GKGG). Positions 54–421 (AGAVIGKGGK…QIRHESGASI (368 aa)) are 2 X 22 AA approximate repeats. A 5 X 4 AA repeats of G-X-G-G region spans residues 59 to 407 (GKGGKNIKAL…LAGSIIGKGG (349 aa)). Phosphoserine is present on residues S75 and S116. Residues 144–209 (DCELRLLIHQ…DRVVECIKII (66 aa)) enclose the KH 2 domain. Residue K163 forms a Glycyl lysine isopeptide (Lys-Gly) (interchain with G-Cter in SUMO1); alternate linkage. K163 participates in a covalent cross-link: Glycyl lysine isopeptide (Lys-Gly) (interchain with G-Cter in SUMO2); alternate. K198 is modified (N6-acetyllysine). An interaction with ZIK1 region spans residues 209–337 (ILDLISESPI…RPGDRYDGMV (129 aa)). A phosphoserine mark is found at S214 and S216. K219 participates in a covalent cross-link: Glycyl lysine isopeptide (Lys-Gly) (interchain with G-Cter in SUMO2); alternate. K219 carries the N6-succinyllysine; alternate modification. The segment at 236-273 (YGGFTMMFDDRRGRPVGFPMRGRGGFDRMPPGRGGRPM) is RNA-binding RGG-box. Tandem repeats lie at residues 245-250 (DRRGRP), 257-260 (GRGG), and 267-270 (GRGG). The tract at residues 245-329 (DRRGRPVGFP…LMAYDRRGRP (85 aa)) is 2 X 6 AA approximate repeats. Positions 250 to 329 (PVGFPMRGRG…LMAYDRRGRP (80 aa)) are disordered. Positions 252–266 (GFPMRGRGGFDRMPP) are enriched in low complexity. The span at 276-285 (SRRDYDDMSP) shows a compositional bias: basic and acidic residues. S284 is subject to Phosphoserine. One copy of the 3-4 repeat lies at 295 to 298 (GRGG). The residue at position 316 (R316) is an Omega-N-methylarginine. Residues 324–329 (DRRGRP) form a 2-2 repeat. Omega-N-methylarginine is present on R377. S379 is subject to Phosphoserine. A Phosphotyrosine modification is found at Y380. The KH 3 domain occupies 387–451 (IITTQVTIPK…DQIQNAQYLL (65 aa)). 2 tandem repeats follow at residues 399–421 (AGSI…GASI) and 404–407 (GKGG). The residue at position 405 (K405) is an N6-acetyllysine; alternate. Residue K405 forms a Glycyl lysine isopeptide (Lys-Gly) (interchain with G-Cter in SUMO2); alternate linkage. At S420 the chain carries Phosphoserine. K422 participates in a covalent cross-link: Glycyl lysine isopeptide (Lys-Gly) (interchain with G-Cter in SUMO1); alternate. K422 is covalently cross-linked (Glycyl lysine isopeptide (Lys-Gly) (interchain with G-Cter in SUMO2); alternate). A Glycyl lysine isopeptide (Lys-Gly) (interchain with G-Cter in SUMO); alternate cross-link involves residue K422.

In terms of assembly, identified in the spliceosome C complex. Interacts with ANKRD28, RBM42 and ZIK1. Interacts with DDX1. Interacts with MDM2; this interaction leads to ubiquitination and proteasomal degradation. Interacts with p53/TP53. Interacts with BRDT. Interacts with IVNS1ABP. Interacts with PPIA/CYPA. Part of a transcription inhibitory ribonucleoprotein complex composed at least of the circular RNA circZNF827, ZNF827 and HNRNPL. Sumoylated by CBX4. Sumoylation is increased upon DNA damage, such as that produced by doxorubicin, etoposide, UV light and camptothecin, due to enhanced CBX4 phosphorylation by HIPK2 under these conditions. In terms of processing, ubiquitinated by MDM2. Doxorubicin treatment does not affect monoubiquitination, but slightly decreases HNRNPK poly-ubiquitination. Post-translationally, O-glycosylated (O-GlcNAcylated), in a cell cycle-dependent manner.

It is found in the cytoplasm. Its subcellular location is the nucleus. It localises to the nucleoplasm. The protein resides in the cell projection. The protein localises to the podosome. One of the major pre-mRNA-binding proteins. Binds tenaciously to poly(C) sequences. Likely to play a role in the nuclear metabolism of hnRNAs, particularly for pre-mRNAs that contain cytidine-rich sequences. Can also bind poly(C) single-stranded DNA. Plays an important role in p53/TP53 response to DNA damage, acting at the level of both transcription activation and repression. When sumoylated, acts as a transcriptional coactivator of p53/TP53, playing a role in p21/CDKN1A and 14-3-3 sigma/SFN induction. As far as transcription repression is concerned, acts by interacting with long intergenic RNA p21 (lincRNA-p21), a non-coding RNA induced by p53/TP53. This interaction is necessary for the induction of apoptosis, but not cell cycle arrest. As part of a ribonucleoprotein complex composed at least of ZNF827, HNRNPL and the circular RNA circZNF827 that nucleates the complex on chromatin, may negatively regulate the transcription of genes involved in neuronal differentiation. The sequence is that of Heterogeneous nuclear ribonucleoprotein K (HNRNPK) from Bos taurus (Bovine).